We begin with the raw amino-acid sequence, 428 residues long: D-amino acid dehydrogenase (428 aa).

3–17 is an FAD binding site; that stretch reads VVILGSGVVGVASAY.

This sequence belongs to the DadA oxidoreductase family. The cofactor is FAD.

It carries out the reaction a D-alpha-amino acid + A + H2O = a 2-oxocarboxylate + AH2 + NH4(+). Its pathway is amino-acid degradation; D-alanine degradation; NH(3) and pyruvate from D-alanine: step 1/1. Its function is as follows. Oxidative deamination of D-amino acids. This Burkholderia vietnamiensis (strain G4 / LMG 22486) (Burkholderia cepacia (strain R1808)) protein is D-amino acid dehydrogenase.